A 224-amino-acid chain; its full sequence is CASP-like protein 3A1 (224 aa).

The Cytoplasmic portion of the chain corresponds to 1–59; it reads MMMNGQKLAPAAEVAVQLPESKVAADNISGTMSGPLVGASGGGTTAAMRPFGRKAEVMH. The helical transmembrane segment at 60–80 threads the bilayer; that stretch reads VLLRLLCIITSVAALSFMFTA. Residues 81–106 lie on the Extracellular side of the membrane; it reads QQSSTISIYGFMLPVQSKWSFSHSFE. Residues 107 to 127 form a helical membrane-spanning segment; sequence YLVGVSAAVAAHSLLQLLISM. Over 128-142 the chain is Cytoplasmic; it reads SRLLRKSPVIPSRSH. A helical membrane pass occupies residues 143 to 163; that stretch reads AWLIFAGDQVFAYAMISAGAA. The Extracellular segment spans residues 164–192; that stretch reads ASGVTNLNRTGIQHTALPNFCKPLQSFCD. N171 carries N-linked (GlcNAc...) asparagine glycosylation. The chain crosses the membrane as a helical span at residues 193-213; that stretch reads HVAVSIFFTFTSCFLLAASAV. The Cytoplasmic segment spans residues 214 to 224; that stretch reads QEVIWLSRSKY.

This sequence belongs to the Casparian strip membrane proteins (CASP) family. In terms of assembly, homodimer and heterodimers.

The protein localises to the cell membrane. In Populus trichocarpa (Western balsam poplar), this protein is CASP-like protein 3A1.